A 259-amino-acid polypeptide reads, in one-letter code: UPF0246 protein NGK_0633 (259 aa).

This sequence belongs to the UPF0246 family.

This chain is UPF0246 protein NGK_0633, found in Neisseria gonorrhoeae (strain NCCP11945).